A 492-amino-acid chain; its full sequence is 2,3-bisphosphoglycerate-independent phosphoglycerate mutase (492 aa).

Residues D11 and S61 each contribute to the Mn(2+) site. S61 serves as the catalytic Phosphoserine intermediate. Substrate contacts are provided by residues H118, 147 to 148, R178, R184, 248 to 251, and K320; these read RD and RNDR. 5 residues coordinate Mn(2+): D386, H390, D427, H428, and H445.

It belongs to the BPG-independent phosphoglycerate mutase family. As to quaternary structure, monomer. The cofactor is Mn(2+).

The enzyme catalyses (2R)-2-phosphoglycerate = (2R)-3-phosphoglycerate. Its pathway is carbohydrate degradation; glycolysis; pyruvate from D-glyceraldehyde 3-phosphate: step 3/5. Its function is as follows. Catalyzes the interconversion of 2-phosphoglycerate and 3-phosphoglycerate. The chain is 2,3-bisphosphoglycerate-independent phosphoglycerate mutase from Campylobacter jejuni subsp. jejuni serotype O:2 (strain ATCC 700819 / NCTC 11168).